The sequence spans 489 residues: L-asparagine permease 1 (489 aa).

12 helical membrane passes run 25 to 45 (QLQM…GAGG), 49 to 69 (KAGP…FLIL), 100 to 120 (AVGW…TTAI), 137 to 157 (ILAL…VEWF), 162 to 182 (FWAA…GTVF), 210 to 230 (WLPL…VELV), 255 to 275 (IAIF…YTAY), 289 to 309 (IGFH…ALSS), 344 to 364 (YGGI…NAFK), 369 to 389 (FEIV…TIVL), 413 to 433 (SPYS…TMAS), and 439 to 459 (TWTV…WYLV).

The protein belongs to the amino acid-polyamine-organocation (APC) superfamily. Amino acid transporter (AAT) (TC 2.A.3.1) family.

It localises to the cell membrane. This chain is L-asparagine permease 1 (ansP1), found in Mycobacterium tuberculosis (strain CDC 1551 / Oshkosh).